A 376-amino-acid polypeptide reads, in one-letter code: Phosphoglycerate kinase (376 aa).

13 residues coordinate (2R)-3-phosphoglycerate: V1, D2, F3, N4, R17, S40, H41, G43, R44, L99, R100, H147, and R148. An ADP-binding site is contributed by G191. CDP is bound at residue G191. Residues A192 and K193 each coordinate AMP. A192 contacts ATP. Residue A192 participates in Mg(2+) binding. CDP is bound at residue D196. A Mg(2+)-binding site is contributed by D196. AMP is bound at residue K197. K197 provides a ligand contact to ATP. Residue G215 participates in ADP binding. G215 provides a ligand contact to CDP. Residues G216 and G290 each coordinate AMP. 2 residues coordinate ATP: G216 and G290. Residues G315 and F320 each contribute to the CDP site. F320 provides a ligand contact to ADP. E321 is an AMP binding site. Positions 321, 352, and 353 each coordinate ATP. A Mg(2+)-binding site is contributed by D352.

This sequence belongs to the phosphoglycerate kinase family. In terms of assembly, monomer. It depends on Mg(2+) as a cofactor.

The catalysed reaction is (2R)-3-phosphoglycerate + ATP = (2R)-3-phospho-glyceroyl phosphate + ADP. Its pathway is carbohydrate degradation; glycolysis; pyruvate from D-glyceraldehyde 3-phosphate: step 2/5. The polypeptide is Phosphoglycerate kinase (PGK) (Glaucoma chattoni).